The primary structure comprises 1793 residues: Nucleoporin NUP145 (1793 aa).

GLFG repeat units follow at residues 50-53, 143-146, 255-258, 282-285, 292-295, 306-309, 336-339, 381-384, and 395-398; these read GLFG. 4 disordered regions span residues 404-583, 740-859, 999-1043, and 1066-1097; these read GSAF…QQPQ, RTDL…EPGA, GDDD…DDTF, and EVAN…PEDE. Residues 417–431 are compositionally biased toward polar residues; that stretch reads NQSTGTSLFGNTQQK. 5 GLFG repeats span residues 434-437, 446-449, 470-473, 481-484, and 496-499; these read GLFG. Over residues 437–459 the composition is skewed to low complexity; sequence GSTTTNTSGGLFGSTNTGTSTFG. Gly residues predominate over residues 467-483; sequence TGGGLFGSKPAGTGGLF. Residues 500-511 show a composition bias toward polar residues; that stretch reads NLNTNAQTQQPA. Residues 514-517 form a GLFG 15 repeat; sequence GLFG. A compositionally biased stretch (low complexity) spans 518-535; the sequence is NLGQNNQAKPSLFGTSTT. The GLFG 16 repeat unit spans residues 539-542; it reads GLFG. Composition is skewed to polar residues over residues 546-575 and 801-813; these read AQQQ…FGSS and STAN…NGAK. Residues 814-823 show a composition bias toward low complexity; that stretch reads SSPVAAASPP. Over residues 826-840 the composition is skewed to basic and acidic residues; the sequence is EQVKGKELAVVHEEE. The Peptidase S59 domain maps to 857–993; it reads PGAYWMSPTA…GVWAFSVEHF (137 aa). A nucleoporin RNA-binding motif (NRM) region spans residues 859–992; sequence AYWMSPTADD…TGVWAFSVEH (134 aa). Acidic residues predominate over residues 999–1013; it reads GDDDDYDDDDYETEP. Positions 1025–1037 are enriched in low complexity; the sequence is TSPSISKSSTSPI.

This sequence belongs to the nucleoporin GLFG family. In terms of assembly, component of the nuclear pore complex (NPC). NPC constitutes the exclusive means of nucleocytoplasmic transport. NPCs allow the passive diffusion of ions and small molecules and the active, nuclear transport receptor-mediated bidirectional transport of macromolecules such as proteins, RNAs, ribonucleoparticles (RNPs), and ribosomal subunits across the nuclear envelope. Due to its 8-fold rotational symmetry, all subunits are present with 8 copies or multiples thereof. Post-translationally, NUP145 is autocatalytically cleaved in NUP145N and NUP145C.

Its subcellular location is the nucleus. The protein resides in the nuclear pore complex. It localises to the nucleus membrane. Its function is as follows. Functions as a component of the nuclear pore complex (NPC). NPC components, collectively referred to as nucleoporins (NUPs), can play the role of both NPC structural components and of docking or interaction partners for transiently associated nuclear transport factors. Active directional transport is assured by both, a Phe-Gly (FG) repeat affinity gradient for these transport factors across the NPC and a transport cofactor concentration gradient across the nuclear envelope. NUP145 is autocatalytically cleaved in vivo in 2 polypeptides which assume different functions in the NPC. NUP145N as one of the FG repeat nucleoporins participates in karyopherin interactions and contains part of the autocatalytic cleavage activity. NUP145C as part of the NUP84 complex is involved in nuclear poly(A)+ RNA and tRNA export. The sequence is that of Nucleoporin NUP145 (NUP145) from Chaetomium thermophilum (strain DSM 1495 / CBS 144.50 / IMI 039719) (Thermochaetoides thermophila).